Reading from the N-terminus, the 350-residue chain is Putative transport protein YdbI (350 aa).

A run of 8 helical transmembrane segments spans residues Ile18 to Leu38, Val67 to Phe87, Ile145 to Glu165, Phe207 to Pro227, Leu229 to Ile249, Ile257 to Ile277, Leu289 to Glu309, and Phe311 to Leu331.

It belongs to the autoinducer-2 exporter (AI-2E) (TC 2.A.86) family.

It localises to the cell membrane. This Bacillus subtilis (strain 168) protein is Putative transport protein YdbI (ydbI).